A 436-amino-acid polypeptide reads, in one-letter code: Trigger factor (436 aa).

Positions 161–246 (DDQLNIDFVG…VNSVSEPKLP (86 aa)) constitute a PPIase FKBP-type domain.

Belongs to the FKBP-type PPIase family. Tig subfamily.

It is found in the cytoplasm. It carries out the reaction [protein]-peptidylproline (omega=180) = [protein]-peptidylproline (omega=0). Involved in protein export. Acts as a chaperone by maintaining the newly synthesized protein in an open conformation. Functions as a peptidyl-prolyl cis-trans isomerase. The protein is Trigger factor of Pseudomonas fluorescens (strain ATCC BAA-477 / NRRL B-23932 / Pf-5).